The primary structure comprises 441 residues: Ribosomal protein uS12 methylthiotransferase RimO (441 aa).

In terms of domain architecture, MTTase N-terminal spans 6-116 (QKVGIVSLGC…VVAAVHEAAP (111 aa)). Positions 15, 51, 80, 147, 151, and 154 each coordinate [4Fe-4S] cluster. The 238-residue stretch at 133 to 370 (LTPRHYAYLK…MAAQQEISER (238 aa)) folds into the Radical SAM core domain. Residues 373 to 439 (AQKVGTVIEA…EYDLWGSLAG (67 aa)) enclose the TRAM domain.

Belongs to the methylthiotransferase family. RimO subfamily. Requires [4Fe-4S] cluster as cofactor.

The protein localises to the cytoplasm. It carries out the reaction L-aspartate(89)-[ribosomal protein uS12]-hydrogen + (sulfur carrier)-SH + AH2 + 2 S-adenosyl-L-methionine = 3-methylsulfanyl-L-aspartate(89)-[ribosomal protein uS12]-hydrogen + (sulfur carrier)-H + 5'-deoxyadenosine + L-methionine + A + S-adenosyl-L-homocysteine + 2 H(+). Catalyzes the methylthiolation of an aspartic acid residue of ribosomal protein uS12. In Rhodospirillum rubrum (strain ATCC 11170 / ATH 1.1.1 / DSM 467 / LMG 4362 / NCIMB 8255 / S1), this protein is Ribosomal protein uS12 methylthiotransferase RimO.